The chain runs to 206 residues: Small ribosomal subunit protein uS4 (206 aa).

The region spanning 96–156 (GRLDNVVYRM…EKAKQQARIK (61 aa)) is the S4 RNA-binding domain.

The protein belongs to the universal ribosomal protein uS4 family. In terms of assembly, part of the 30S ribosomal subunit. Contacts protein S5. The interaction surface between S4 and S5 is involved in control of translational fidelity.

Functionally, one of the primary rRNA binding proteins, it binds directly to 16S rRNA where it nucleates assembly of the body of the 30S subunit. In terms of biological role, with S5 and S12 plays an important role in translational accuracy. This Vibrio campbellii (strain ATCC BAA-1116) protein is Small ribosomal subunit protein uS4.